We begin with the raw amino-acid sequence, 686 residues long: Methionine--tRNA ligase (686 aa).

A 'HIGH' region motif is present at residues 15–25; the sequence is PYANGSIHLGH. Zn(2+)-binding residues include Cys146, Cys149, Cys159, and Cys162. Residues 332–336 carry the 'KMSKS' region motif; sequence KMSKS. Lys335 contacts ATP. The segment at 550 to 571 is disordered; sequence AAAEAAAKEKAEAEKEQASQTE. A tRNA-binding domain is found at 585–686; that stretch reads AFSAVDMRIA…EGAQPGMRVM (102 aa).

This sequence belongs to the class-I aminoacyl-tRNA synthetase family. MetG type 1 subfamily. Homodimer. Zn(2+) serves as cofactor.

Its subcellular location is the cytoplasm. It catalyses the reaction tRNA(Met) + L-methionine + ATP = L-methionyl-tRNA(Met) + AMP + diphosphate. Functionally, is required not only for elongation of protein synthesis but also for the initiation of all mRNA translation through initiator tRNA(fMet) aminoacylation. This is Methionine--tRNA ligase from Vibrio atlanticus (strain LGP32) (Vibrio splendidus (strain Mel32)).